Here is a 430-residue protein sequence, read N- to C-terminus: Serine--tRNA ligase (430 aa).

236–238 (TAE) provides a ligand contact to L-serine. 267 to 269 (RSE) contributes to the ATP binding site. Position 290 (Glu290) interacts with L-serine. 354–357 (EISS) contributes to the ATP binding site. Residue Ser390 participates in L-serine binding.

This sequence belongs to the class-II aminoacyl-tRNA synthetase family. Type-1 seryl-tRNA synthetase subfamily. Homodimer. The tRNA molecule binds across the dimer.

The protein localises to the cytoplasm. The catalysed reaction is tRNA(Ser) + L-serine + ATP = L-seryl-tRNA(Ser) + AMP + diphosphate + H(+). The enzyme catalyses tRNA(Sec) + L-serine + ATP = L-seryl-tRNA(Sec) + AMP + diphosphate + H(+). It participates in aminoacyl-tRNA biosynthesis; selenocysteinyl-tRNA(Sec) biosynthesis; L-seryl-tRNA(Sec) from L-serine and tRNA(Sec): step 1/1. In terms of biological role, catalyzes the attachment of serine to tRNA(Ser). Is also able to aminoacylate tRNA(Sec) with serine, to form the misacylated tRNA L-seryl-tRNA(Sec), which will be further converted into selenocysteinyl-tRNA(Sec). This chain is Serine--tRNA ligase, found in Idiomarina loihiensis (strain ATCC BAA-735 / DSM 15497 / L2-TR).